The sequence spans 95 residues: ESAT-6-like protein EsxH (95 aa).

The protein belongs to the WXG100 family. ESAT-6 subfamily. As to quaternary structure, forms a tight 1:1 complex with EsxG.

The protein localises to the secreted. This is ESAT-6-like protein EsxH from Mycolicibacterium smegmatis (strain ATCC 700084 / mc(2)155) (Mycobacterium smegmatis).